Reading from the N-terminus, the 197-residue chain is ATP-dependent Clp protease proteolytic subunit (197 aa).

S98 acts as the Nucleophile in catalysis. H123 is an active-site residue.

Belongs to the peptidase S14 family. In terms of assembly, fourteen ClpP subunits assemble into 2 heptameric rings which stack back to back to give a disk-like structure with a central cavity, resembling the structure of eukaryotic proteasomes.

Its subcellular location is the cytoplasm. The catalysed reaction is Hydrolysis of proteins to small peptides in the presence of ATP and magnesium. alpha-casein is the usual test substrate. In the absence of ATP, only oligopeptides shorter than five residues are hydrolyzed (such as succinyl-Leu-Tyr-|-NHMec, and Leu-Tyr-Leu-|-Tyr-Trp, in which cleavage of the -Tyr-|-Leu- and -Tyr-|-Trp bonds also occurs).. Functionally, cleaves peptides in various proteins in a process that requires ATP hydrolysis. Has a chymotrypsin-like activity. Plays a major role in the degradation of misfolded proteins. The polypeptide is ATP-dependent Clp protease proteolytic subunit (Natranaerobius thermophilus (strain ATCC BAA-1301 / DSM 18059 / JW/NM-WN-LF)).